A 681-amino-acid chain; its full sequence is Probable glutamate carboxypeptidase LAMP1 (681 aa).

The Cytoplasmic segment spans residues 1 to 6 (MSKSKS). A helical; Signal-anchor for type II membrane protein membrane pass occupies residues 7–24 (LAFVIAALSYSFFSLFSS). Residues 25 to 681 (PPKSHYHELF…ASLVLKGELI (657 aa)) lie on the Extracellular side of the membrane. N-linked (GlcNAc...) asparagine glycans are attached at residues Asn42, Asn140, Asn166, and Asn299. The segment at 241–527 (SVDGCERLSD…SVLGLVALRL (287 aa)) is catalytic. Residues His333 and Asp343 each contribute to the Zn(2+) site. Glu380 serves as the catalytic Nucleophile. Positions 381 and 409 each coordinate Zn(2+). N-linked (GlcNAc...) asparagine glycosylation is present at Asn441. Position 493 (His493) interacts with Zn(2+). An N-linked (GlcNAc...) asparagine glycan is attached at Asn536.

This sequence belongs to the peptidase M28 family. M28B subfamily. Requires Zn(2+) as cofactor.

The protein localises to the endoplasmic reticulum membrane. The enzyme catalyses Release of an unsubstituted, C-terminal glutamyl residue, typically from Ac-Asp-Glu or folylpoly-gamma-glutamates.. Functionally, acts in association with AMP1 to suppress ectopic stem cell niche formation in the shoot apical meristem (SAM) independently of cytokinin signaling pathway. In Arabidopsis thaliana (Mouse-ear cress), this protein is Probable glutamate carboxypeptidase LAMP1.